The sequence spans 950 residues: Leucine--tRNA ligase 2 (950 aa).

The 'HIGH' region motif lies at 47–57 (PYPNSPFHLGH). Residues 631 to 635 (KMSKS) carry the 'KMSKS' region motif. Lys-634 serves as a coordination point for ATP.

The protein belongs to the class-I aminoacyl-tRNA synthetase family.

The protein resides in the cytoplasm. The enzyme catalyses tRNA(Leu) + L-leucine + ATP = L-leucyl-tRNA(Leu) + AMP + diphosphate. The protein is Leucine--tRNA ligase 2 of Metallosphaera sedula (strain ATCC 51363 / DSM 5348 / JCM 9185 / NBRC 15509 / TH2).